Consider the following 68-residue polypeptide: Beta-defensin 1 (68 aa).

The first 21 residues, 1–21 (MRTSYLLLFTLCLLLSEMASG), serve as a signal peptide directing secretion. Residues 22–32 (DNFLTGLGHRS) constitute a propeptide that is removed on maturation. Disulfide bonds link C37/C66, C44/C59, and C49/C67.

It belongs to the beta-defensin family. As to quaternary structure, monomer. Homodimer.

Its subcellular location is the secreted. It is found in the membrane. Functionally, has bactericidal activity. May act as a ligand for C-C chemokine receptor CCR6. Positively regulates the sperm motility and bactericidal activity in a CCR6-dependent manner. Binds to CCR6 and triggers Ca2+ mobilization in the sperm which is important for its motility. The sequence is that of Beta-defensin 1 (DEFB1) from Hylobates moloch (Silvery gibbon).